We begin with the raw amino-acid sequence, 210 residues long: Protein GrpE (210 aa).

2 disordered regions span residues 1–40 and 191–210; these read MTDDTTKNGPDATAADAAADATAYVENETAQQEPAQPDPI and KGGPKPAEAETNSVFDEKDA. The segment covering 11 to 23 has biased composition (low complexity); that stretch reads DATAADAAADATA.

It belongs to the GrpE family. As to quaternary structure, homodimer.

The protein resides in the cytoplasm. Participates actively in the response to hyperosmotic and heat shock by preventing the aggregation of stress-denatured proteins, in association with DnaK and GrpE. It is the nucleotide exchange factor for DnaK and may function as a thermosensor. Unfolded proteins bind initially to DnaJ; upon interaction with the DnaJ-bound protein, DnaK hydrolyzes its bound ATP, resulting in the formation of a stable complex. GrpE releases ADP from DnaK; ATP binding to DnaK triggers the release of the substrate protein, thus completing the reaction cycle. Several rounds of ATP-dependent interactions between DnaJ, DnaK and GrpE are required for fully efficient folding. The sequence is that of Protein GrpE from Rhizobium johnstonii (strain DSM 114642 / LMG 32736 / 3841) (Rhizobium leguminosarum bv. viciae).